We begin with the raw amino-acid sequence, 231 residues long: tRNA (guanine-N(1)-)-methyltransferase (231 aa).

Residues Gly112 and 132–137 (IGDYIL) contribute to the S-adenosyl-L-methionine site.

Belongs to the RNA methyltransferase TrmD family. In terms of assembly, homodimer.

Its subcellular location is the cytoplasm. It catalyses the reaction guanosine(37) in tRNA + S-adenosyl-L-methionine = N(1)-methylguanosine(37) in tRNA + S-adenosyl-L-homocysteine + H(+). In terms of biological role, specifically methylates guanosine-37 in various tRNAs. This chain is tRNA (guanine-N(1)-)-methyltransferase, found in Sulfurimonas denitrificans (strain ATCC 33889 / DSM 1251) (Thiomicrospira denitrificans (strain ATCC 33889 / DSM 1251)).